The primary structure comprises 132 residues: Small ribosomal subunit protein uS8 (132 aa).

It belongs to the universal ribosomal protein uS8 family. In terms of assembly, part of the 30S ribosomal subunit. Contacts proteins S5 and S12.

Functionally, one of the primary rRNA binding proteins, it binds directly to 16S rRNA central domain where it helps coordinate assembly of the platform of the 30S subunit. This chain is Small ribosomal subunit protein uS8, found in Acidobacterium capsulatum (strain ATCC 51196 / DSM 11244 / BCRC 80197 / JCM 7670 / NBRC 15755 / NCIMB 13165 / 161).